The following is a 450-amino-acid chain: Glucose-6-phosphate isomerase (450 aa).

Residue threonine 39 is modified to Phosphothreonine. Residue glutamate 291 is the Proton donor of the active site. Catalysis depends on residues histidine 312 and lysine 426.

This sequence belongs to the GPI family.

It localises to the cytoplasm. The enzyme catalyses alpha-D-glucose 6-phosphate = beta-D-fructose 6-phosphate. The protein operates within carbohydrate biosynthesis; gluconeogenesis. It participates in carbohydrate degradation; glycolysis; D-glyceraldehyde 3-phosphate and glycerone phosphate from D-glucose: step 2/4. In terms of biological role, catalyzes the reversible isomerization of glucose-6-phosphate to fructose-6-phosphate. In Bacillus cereus (strain G9842), this protein is Glucose-6-phosphate isomerase.